The chain runs to 86 residues: Progonadoliberin IIB (86 aa).

Residues 1 to 24 (MVHICRLFVVMGMLMFLSVQFASS) form the signal peptide. At Gln25 the chain carries Pyrrolidone carboxylic acid. Position 34 is a glycine amide (Gly34).

This sequence belongs to the GnRH family. Olfactory bulbs, hypothalamus and telencephalon, midbrain and posterior brain areas.

Its subcellular location is the secreted. Its function is as follows. Stimulates the secretion of gonadotropins. The protein is Progonadoliberin IIB (gnrh2b) of Carassius auratus (Goldfish).